A 511-amino-acid chain; its full sequence is Gap junction alpha-3 protein (511 aa).

The stretch at 2–15 (GDWSFLGRLLENAQ) is an intramembrane region. Residues 16-19 (EHST) lie on the Cytoplasmic side of the membrane. A helical transmembrane segment spans residues 20 to 40 (VIGKVWLTVLFIFRILVLGAA). Topologically, residues 41-71 (AEEVWGDEQSDFTCNTQQPGCENVCYDKAFP) are extracellular. Disulfide bonds link C54–C214, C61–C208, and C65–C203. A helical transmembrane segment spans residues 72 to 92 (ISHIRFWVLQIIFVSTPTLIY). Topologically, residues 93–174 (LGHVLHIVRM…GALLRTYIFN (82 aa)) are cytoplasmic. Basic and acidic residues predominate over residues 110–119 (EEELKKRGSV). Positions 110 to 143 (EEELKKRGSVKDNNYPGAATSGGGSGGGNNFKDP) are disordered. The span at 129–138 (TSGGGSGGGN) shows a compositional bias: gly residues. A helical transmembrane segment spans residues 175-195 (IIFKTLFEVGFIVGQYFLYGF). At 196-223 (ELKPVYQCSRPPCPHTVDCFISRPTEKT) the chain is on the extracellular side. The helical transmembrane segment at 224–244 (IFIIFMLVVASVSLLLNMLEI) threads the bilayer. At 245-511 (YHLGWKKLKQ…SRARSDDLAV (267 aa)) the chain is on the cytoplasmic side. Positions 397 to 511 (AEQQGKAPSS…SRARSDDLAV (115 aa)) are disordered. Low complexity-rich tracts occupy residues 403 to 415 (APSS…TPSS) and 440 to 456 (TTTN…ASGS).

It belongs to the connexin family. In terms of assembly, a hemichannel or connexon is composed of a hexamer of connexins. A functional gap junction is formed by the apposition of two hemichannels. During early stages of lens development, interacts with the C-terminus of MIP. Detected in eye lens.

The protein localises to the cell membrane. The protein resides in the cell junction. It is found in the gap junction. In terms of biological role, structural component of lens fiber gap junctions. Gap junctions are dodecameric channels that connect the cytoplasm of adjoining cells. They are formed by the docking of two hexameric hemichannels, one from each cell membrane. Small molecules and ions diffuse from one cell to a neighboring cell via the central pore. In Gallus gallus (Chicken), this protein is Gap junction alpha-3 protein (GJA3).